Here is a 359-residue protein sequence, read N- to C-terminus: 5-amino-6-(D-ribitylamino)uracil--L-tyrosine 4-hydroxyphenyl transferase (359 aa).

The Radical SAM core domain occupies 45 to 282 (VTYVVNANIN…TYAISRIFFK (238 aa)). Residues Cys-59, Cys-63, and Cys-66 each coordinate [4Fe-4S] cluster.

It belongs to the radical SAM superfamily. CofH family. In terms of assembly, consists of two subunits, CofG and CofH. [4Fe-4S] cluster serves as cofactor.

It catalyses the reaction 5-amino-6-(D-ribitylamino)uracil + L-tyrosine + S-adenosyl-L-methionine = 5-amino-5-(4-hydroxybenzyl)-6-(D-ribitylimino)-5,6-dihydrouracil + 2-iminoacetate + 5'-deoxyadenosine + L-methionine + H(+). It functions in the pathway cofactor biosynthesis; coenzyme F0 biosynthesis. Its function is as follows. Catalyzes the radical-mediated synthesis of 5-amino-5-(4-hydroxybenzyl)-6-(D-ribitylimino)-5,6-dihydrouracil from 5-amino-6-(D-ribitylamino)uracil and L-tyrosine. This Methanococcus maripaludis (strain C5 / ATCC BAA-1333) protein is 5-amino-6-(D-ribitylamino)uracil--L-tyrosine 4-hydroxyphenyl transferase.